The sequence spans 249 residues: Metallo-beta-lactamase type 2 (249 aa).

The signal sequence occupies residues 1–18; sequence MKTVFILISMLFPVAVMA. The Zn(2+) site is built by His99, His101, Asp103, His162, and Cys181. Residues Lys184 and Asn193 each contribute to the substrate site. His223 is a binding site for Zn(2+).

Belongs to the metallo-beta-lactamase superfamily. Class-B beta-lactamase family. Monomer. The cofactor is Zn(2+).

Its subcellular location is the periplasm. It carries out the reaction a beta-lactam + H2O = a substituted beta-amino acid. Its activity is regulated as follows. Competitively inhibited by 4-morpholineethanesulfonic acid (MES), SB236050 and biphenyl tetrazoles (BPTs). Also inhibited by chelating agents such as EDTA and 1,10-phenanthroline. CcrA is not susceptible to inactivation by the beta-lactamase-blocking agents clavulanic acid or tazobactam. Confers resistance to the different beta-lactams antibiotics (penicillin, cephalosporin and carbapenem) via the hydrolysis of the beta-lactam ring. The protein is Metallo-beta-lactamase type 2 of Bacteroides fragilis.